Consider the following 315-residue polypeptide: Acetyl-coenzyme A carboxylase carboxyl transferase subunit alpha (315 aa).

The 254-residue stretch at 40 to 293 (LQDKSKTLTE…REELSSQLAM (254 aa)) folds into the CoA carboxyltransferase C-terminal domain.

This sequence belongs to the AccA family. As to quaternary structure, acetyl-CoA carboxylase is a heterohexamer composed of biotin carboxyl carrier protein (AccB), biotin carboxylase (AccC) and two subunits each of ACCase subunit alpha (AccA) and ACCase subunit beta (AccD).

It is found in the cytoplasm. It carries out the reaction N(6)-carboxybiotinyl-L-lysyl-[protein] + acetyl-CoA = N(6)-biotinyl-L-lysyl-[protein] + malonyl-CoA. It functions in the pathway lipid metabolism; malonyl-CoA biosynthesis; malonyl-CoA from acetyl-CoA: step 1/1. Its function is as follows. Component of the acetyl coenzyme A carboxylase (ACC) complex. First, biotin carboxylase catalyzes the carboxylation of biotin on its carrier protein (BCCP) and then the CO(2) group is transferred by the carboxyltransferase to acetyl-CoA to form malonyl-CoA. The polypeptide is Acetyl-coenzyme A carboxylase carboxyl transferase subunit alpha (Pseudomonas syringae pv. tomato (strain ATCC BAA-871 / DC3000)).